Consider the following 156-residue polypeptide: 16 kDa phloem protein 1 (156 aa).

The 108-residue stretch at 1-108 (MAVGILEVSL…LEMGVEKGTA (108 aa)) folds into the C2 domain. Residues D20, D26, D78, D80, S83, and D86 each contribute to the Ca(2+) site.

Ca(2+) is required as a cofactor.

Binds to both sense and antisense RNA. Can also bind sheared DNA and dodecamer DNA with a low affinity. Interacts with mesophyll plasmodesmata to mediate its own cell-to-cell transport and potentiate RNA trafficking. May play a role in plant defense signaling. In Arabidopsis thaliana (Mouse-ear cress), this protein is 16 kDa phloem protein 1.